The sequence spans 518 residues: Cytochrome P450 736A117 (518 aa).

Asn12 is a glycosylation site (N-linked (GlcNAc...) asparagine). A helical membrane pass occupies residues 17–37; it reads FLQPLAFTLLAIFLVLLYTWY. Asn185, Asn275, and Asn356 each carry an N-linked (GlcNAc...) asparagine glycan. Heme is bound at residue Cys460.

It belongs to the cytochrome P450 family. The cofactor is heme. As to expression, expressed at similar levels in fruit kernel, seedlings, leaves, stems and buds.

The protein resides in the membrane. This is Cytochrome P450 736A117 from Prunus mume (Japanese apricot).